A 319-amino-acid polypeptide reads, in one-letter code: MGLVRSFALVIVFLSCLIAVYGQGTRIGFYSTTCPNAETIVRTTVASHFGSDPKVAPGLLRMHNHDCFVQGCDGSVLLSGPNSERTAGANVNLHGFEVIDDAKRQLEAACPGVVSCADILALAARDSVSLTNGQSWQVPTGRRDGRVSLASNVNNLPSPSDSLAIQQRKFSAFRLNTRDLVTLVGGGHTIGTAACGFITNRIFNSSGNTADPTMDQTFVPQLQRLCPQNGDGSARVDLDTGSGNTFDTSYFINLSRNRGILQSDHVLWTSPATRSIVQEFMAPRGNFNVQFARSMVKMSNIGVKTGTNGEIRRVCSAVN.

The signal sequence occupies residues 1-22 (MGLVRSFALVIVFLSCLIAVYG). Disulfide bonds link Cys34/Cys110, Cys67/Cys72, Cys116/Cys315, and Cys195/Cys226. The active-site Proton acceptor is His65. 5 residues coordinate Ca(2+): Asp66, Val69, Gly71, Asp73, and Ser75. Pro157 contacts substrate. His188 contacts heme b. Thr189 lines the Ca(2+) pocket. N-linked (GlcNAc...) asparagine glycosylation is present at Asn204. The Ca(2+) site is built by Asp239, Ser242, and Asp247. Asn253 carries an N-linked (GlcNAc...) asparagine glycan.

Belongs to the peroxidase family. Classical plant (class III) peroxidase subfamily. Requires heme b as cofactor. The cofactor is Ca(2+). As to expression, mainly expressed in roots.

The protein localises to the secreted. It catalyses the reaction 2 a phenolic donor + H2O2 = 2 a phenolic radical donor + 2 H2O. Removal of H(2)O(2), oxidation of toxic reductants, biosynthesis and degradation of lignin, suberization, auxin catabolism, response to environmental stresses such as wounding, pathogen attack and oxidative stress. These functions might be dependent on each isozyme/isoform in each plant tissue. In Arabidopsis thaliana (Mouse-ear cress), this protein is Peroxidase 62 (PER62).